The following is a 632-amino-acid chain: Pentatricopeptide repeat-containing protein ELI1, chloroplastic (632 aa).

A chloroplast-targeting transit peptide spans Met1–Thr19. 10 PPR repeats span residues Asp94–Pro128, Asn129–Ile159, Asp160–Ser194, Thr196–Arg221, Asp222–Lys256, Asp258–Leu292, Asn293–Lys323, Asp324–Ile354, Thr360–Pro395, and Lys396–Asp426. The type E motif stretch occupies residues Leu431–Glu506. Residues Glu497–Phe512 form a required for function in RNA editing region. Residues Asn507–Lys537 are type E(+) motif. The tract at residues Ser538–Trp632 is type DYW motif.

This sequence belongs to the PPR family. PCMP-H subfamily. Zn(2+) is required as a cofactor.

It localises to the plastid. The protein localises to the chloroplast. Functionally, plays a major role in single RNA editing events in chloroplasts. Acts as a site-recognition transacting factor involved in the edition of the site 5 of ndhB1 and ndhB2 (ndhB1-5 and ndhB2-5 sites corresponding to cytidine-830), which are plastid-encoded subunits of the NADH-plastoquinone oxidoreductase. May provide the catalytic activity for editing site conversion. This is Pentatricopeptide repeat-containing protein ELI1, chloroplastic from Arabidopsis thaliana (Mouse-ear cress).